The primary structure comprises 137 residues: 15 kDa protein A (137 aa).

A signal peptide spans 1–20; it reads MAGVWKVLVVLVGLAVVACA. Intrachain disulfides connect C77–C88 and C99–C116.

It belongs to the cathelicidin family. In terms of tissue distribution, large granules of neutrophils.

The protein resides in the secreted. Functionally, binds to bacterial lipopolysaccharides (LPS), potentiates strongly the early antibacterial effects of BPI. Inhibits the late lethal action of BPI. This is 15 kDa protein A from Oryctolagus cuniculus (Rabbit).